The following is a 427-amino-acid chain: 3-deoxy-D-manno-octulosonic acid transferase (427 aa).

The chain crosses the membrane as a helical; Signal-anchor span at residues 4–24 (FFYTSLLLICQPLILCFIGLL). Glu-62 serves as the catalytic Proton acceptor. CMP is bound by residues 270–271 (PR), 311–313 (MGE), and 337–340 (NPLE).

It belongs to the glycosyltransferase group 1 family. Glycosyltransferase 30 subfamily.

It localises to the cell inner membrane. It carries out the reaction lipid IVA (E. coli) + CMP-3-deoxy-beta-D-manno-octulosonate = alpha-Kdo-(2-&gt;6)-lipid IVA (E. coli) + CMP + H(+). It participates in bacterial outer membrane biogenesis; LPS core biosynthesis. Involved in lipopolysaccharide (LPS) biosynthesis. Catalyzes the transfer of a single 3-deoxy-D-manno-octulosonate (Kdo) residue from CMP-Kdo to lipid IV(A), the tetraacyldisaccharide-1,4'-bisphosphate precursor of lipid A. Is strictly monofunctional, i.e. is capable of adding only a single Kdo residue to the acceptor lipid. This is 3-deoxy-D-manno-octulosonic acid transferase (waaA) from Haemophilus influenzae (strain ATCC 51907 / DSM 11121 / KW20 / Rd).